The following is a 468-amino-acid chain: 3-isopropylmalate dehydratase large subunit (468 aa).

[4Fe-4S] cluster is bound by residues Cys347, Cys407, and Cys410.

The protein belongs to the aconitase/IPM isomerase family. LeuC type 1 subfamily. Heterodimer of LeuC and LeuD. It depends on [4Fe-4S] cluster as a cofactor.

It catalyses the reaction (2R,3S)-3-isopropylmalate = (2S)-2-isopropylmalate. Its pathway is amino-acid biosynthesis; L-leucine biosynthesis; L-leucine from 3-methyl-2-oxobutanoate: step 2/4. Functionally, catalyzes the isomerization between 2-isopropylmalate and 3-isopropylmalate, via the formation of 2-isopropylmaleate. The sequence is that of 3-isopropylmalate dehydratase large subunit from Prochlorococcus marinus (strain AS9601).